Here is a 34-residue protein sequence, read N- to C-terminus: MSDIN-like toxin proprotein 7 (34 aa).

A propeptide spanning residues 1–10 is cleaved from the precursor; sequence MSDINATRLP. Positions 11–17 form a cross-link, cyclopeptide (Ala-Pro); that stretch reads AWLTDCP. Residues 18-34 constitute a propeptide that is removed on maturation; the sequence is CVGDDVNRLLTRGESLC.

This sequence belongs to the MSDIN fungal toxin family. Processed by the macrocyclase-peptidase enzyme POPB to yield a toxic cyclic heptapeptide. POPB first removes 10 residues from the N-terminus. Conformational trapping of the remaining peptide forces the enzyme to release this intermediate rather than proceed to macrocyclization. The enzyme rebinds the remaining peptide in a different conformation and catalyzes macrocyclization of the N-terminal 7 residues. As to expression, expressed in basidiocarps.

Functionally, probable toxin that belongs to the MSDIN-like toxin family responsible for a large number of food poisoning cases and deaths. This is MSDIN-like toxin proprotein 7 from Amanita exitialis (Guangzhou destroying angel).